The following is a 345-amino-acid chain: MTLINPNIQESNKLKFKDESYLDFNSIKGGDIRHDWSSEEIKEILDLPLMDLLWRAQIVHRSYNPGYKVQLASLLSVKTGGCSEDCAYCPQSVHNETTVQPNPVIEVESVLDRARAAKDAGADRFCMGWAWREIKDGNAFDSMLEMVKGVRELGLEACVTAGMITDSQASRLAEAGLTAYNHNLDTSPEHYSKIISTRTYQDRLETLRRVRMAGITVCCGGIIGMGESVSDRASLLKVLATLDPHPESVPINALVAVEGTPMEDLSSIDPLEMVRMVATARIIMPKSRIRLSAGRQQLGREAQILCLQSGADSIFYGDTLLTTSNPEVEADRKLLADAGITANFS.

The 229-residue stretch at 67–295 (YKVQLASLLS…KSRIRLSAGR (229 aa)) folds into the Radical SAM core domain. Cys-82, Cys-86, and Cys-89 together coordinate [4Fe-4S] cluster. 4 residues coordinate [2Fe-2S] cluster: Cys-126, Cys-158, Cys-218, and Arg-290.

The protein belongs to the radical SAM superfamily. Biotin synthase family. As to quaternary structure, homodimer. It depends on [4Fe-4S] cluster as a cofactor. The cofactor is [2Fe-2S] cluster.

The catalysed reaction is (4R,5S)-dethiobiotin + (sulfur carrier)-SH + 2 reduced [2Fe-2S]-[ferredoxin] + 2 S-adenosyl-L-methionine = (sulfur carrier)-H + biotin + 2 5'-deoxyadenosine + 2 L-methionine + 2 oxidized [2Fe-2S]-[ferredoxin]. Its pathway is cofactor biosynthesis; biotin biosynthesis; biotin from 7,8-diaminononanoate: step 2/2. In terms of biological role, catalyzes the conversion of dethiobiotin (DTB) to biotin by the insertion of a sulfur atom into dethiobiotin via a radical-based mechanism. In Prochlorococcus marinus (strain NATL2A), this protein is Biotin synthase.